The primary structure comprises 78 residues: Conotoxin ba1890.8 (78 aa).

The first 22 residues, 1–22 (MKTSGRLLFLCLAVGLLLESQA), serve as a signal peptide directing secretion. Positions 23 to 61 (HPIADAEDATRNVGSDGTSVELSEILERGQDSSAEKGQR) are excised as a propeptide. Residues 25-78 (IADAEDATRNVGSDGTSVELSEILERGQDSSAEKGQRQNDHDVDESGHDIPFPS) are disordered. A compositionally biased stretch (polar residues) spans 34–43 (NVGSDGTSVE). The segment covering 47–72 (ILERGQDSSAEKGQRQNDHDVDESGH) has biased composition (basic and acidic residues). Glutamine 62 carries the pyrrolidone carboxylic acid modification.

The protein belongs to the conotoxin H superfamily. In terms of tissue distribution, expressed by the venom duct.

It localises to the secreted. Probable toxin. In Conus bayani (Bayan's cone), this protein is Conotoxin ba1890.8.